Here is a 133-residue protein sequence, read N- to C-terminus: Large-conductance mechanosensitive channel (133 aa).

The next 2 membrane-spanning stretches (helical) occupy residues 14-34 (VVDLAVGVVIGAAFGKIVSSL) and 67-87 (GNFIQTIFDFLIIAAAIFMFV).

Belongs to the MscL family. Homopentamer.

The protein localises to the cell membrane. Channel that opens in response to stretch forces in the membrane lipid bilayer. May participate in the regulation of osmotic pressure changes within the cell. This Bacillus cereus (strain AH187) protein is Large-conductance mechanosensitive channel.